We begin with the raw amino-acid sequence, 263 residues long: MDLQLKEKLVLITGSTSGIGKAAAKSFLQEGAAVIVNGRKQETVDRTIEELSGYGTVHGAAADLSKTDEAAAFIEKVNEIGDIDILVNNLGFFEVKDFADVTDEEWNQYFEVNVMSAVRTSRHFLPKMLAKNSGRILNIASEAGVKPLPTMIPYSMTKTALISLSRGMAEMTKGTNVTVNSVLPGPTWTEGVASYMEGAAQAAGQDTDTFIKDYFKVNEPTSLIQRYATAEEVANTIVFLASDAASAINGTAQRVEGGIIRSL.

13 to 20 (TGSTSGIG) contacts NADP(+). Ser-141 contacts substrate. Tyr-154 functions as the Proton acceptor in the catalytic mechanism.

Belongs to the short-chain dehydrogenases/reductases (SDR) family.

This is an uncharacterized protein from Bacillus subtilis (strain 168).